Reading from the N-terminus, the 146-residue chain is Hemoglobin subunit beta (146 aa).

Residue Val-1 is modified to N-acetylvaline. The Globin domain occupies 2 to 146 (HLTGEEKSAV…VANALAHKYH (145 aa)). Phosphothreonine is present on Thr-12. Ser-44 carries the phosphoserine modification. Lys-59 is subject to N6-acetyllysine. His-63 serves as a coordination point for heme b. Lys-82 is subject to N6-acetyllysine. Residue His-92 coordinates heme b. Cys-93 is modified (S-nitrosocysteine). An N6-acetyllysine modification is found at Lys-144.

This sequence belongs to the globin family. Heterotetramer of two alpha chains and two beta chains. Red blood cells.

Functionally, involved in oxygen transport from the lung to the various peripheral tissues. The protein is Hemoglobin subunit beta (HBB) of Loris tardigradus (Slender loris).